We begin with the raw amino-acid sequence, 209 residues long: Large ribosomal subunit protein uL3 (209 aa).

A disordered region spans residues 141-163 (RAVGSMGASSDPSRTFKNKRMPG).

Belongs to the universal ribosomal protein uL3 family. As to quaternary structure, part of the 50S ribosomal subunit. Forms a cluster with proteins L14 and L19.

One of the primary rRNA binding proteins, it binds directly near the 3'-end of the 23S rRNA, where it nucleates assembly of the 50S subunit. In Clostridium botulinum (strain Kyoto / Type A2), this protein is Large ribosomal subunit protein uL3.